A 505-amino-acid chain; its full sequence is Gap junction alpha-10 protein (505 aa).

The Cytoplasmic segment spans residues 1–16 (MGDWNLLGGILEEVHS). Residues 17-37 (HSTIVGKIWLTILFIFRMLVL) traverse the membrane as a helical segment. The Extracellular portion of the chain corresponds to 38 to 76 (GVAAEDVWDDEQSAFACNTQQPGCNNICYDDAFPISLIR). Residues 77–97 (FWVLQIIFVSSPSLVYMGHAL) form a helical membrane-spanning segment. Residues 98-165 (YRLRDFEKQR…TYVLHILTRS (68 aa)) lie on the Cytoplasmic side of the membrane. The helical transmembrane segment at 166 to 186 (VLEVGFMIGQYILYGFQMHPI) threads the bilayer. Residues 187–209 (YKCTQAPCPNSVDCFVSRPTEKT) lie on the Extracellular side of the membrane. Residues 210-230 (IFMLFMHSIAAISLLLNILEI) traverse the membrane as a helical segment. Topologically, residues 231–505 (FHLGIRKIMR…IIHETYVYVY (275 aa)) are cytoplasmic. The span at 371–383 (TMTASQHRPSSAL) shows a compositional bias: polar residues. Residues 371 to 491 (TMTASQHRPS…SKSSHVDSPP (121 aa)) form a disordered region. Over residues 437–446 (MSEKGQRHSD) the composition is skewed to basic and acidic residues. The segment covering 447-460 (SGSSRSLNSSCLDF) has biased composition (low complexity).

This sequence belongs to the connexin family. Alpha-type (group II) subfamily. As to quaternary structure, a connexon is composed of a hexamer of connexins. Low levels were detected in skin, heart, kidney, testis, ovary, intestine. Expression not detected in brain, sciatic nerve or liver. According to PubMed:15147297 expression is detected only in horizontal cells in the inner nuclear layer of the retina and not in other neurons of the central nervous system or tissues. Detected in the outer plexiform layer of the retina (at protein level).

The protein resides in the cell membrane. Its subcellular location is the cell junction. It localises to the gap junction. Functionally, one gap junction consists of a cluster of closely packed pairs of transmembrane channels, the connexons, through which materials of low MW diffuse from one cell to a neighboring cell. Involved in tracer coupling between horizontal cells of the retina. May play a role in the regulation of horizontal cell patterning. The protein is Gap junction alpha-10 protein (Gja10) of Mus musculus (Mouse).